The primary structure comprises 439 residues: Xaa-Pro dipeptidase (439 aa).

Asp244, Asp255, His335, Glu380, and Glu419 together coordinate Mn(2+).

The protein belongs to the peptidase M24B family. Bacterial-type prolidase subfamily. Requires Mn(2+) as cofactor.

The enzyme catalyses Xaa-L-Pro dipeptide + H2O = an L-alpha-amino acid + L-proline. Splits dipeptides with a prolyl residue in the C-terminal position. The chain is Xaa-Pro dipeptidase from Shewanella sp. (strain MR-7).